The following is a 392-amino-acid chain: 1-deoxy-D-xylulose 5-phosphate reductoisomerase (392 aa).

6 residues coordinate NADPH: T10, G11, S12, I13, N38, and N124. K125 contacts 1-deoxy-D-xylulose 5-phosphate. Residue E126 coordinates NADPH. Residue D150 participates in Mn(2+) binding. S151, E152, S176, and H199 together coordinate 1-deoxy-D-xylulose 5-phosphate. E152 is a Mn(2+) binding site. G205 contributes to the NADPH binding site. 4 residues coordinate 1-deoxy-D-xylulose 5-phosphate: S212, N217, K218, and E221. E221 contributes to the Mn(2+) binding site.

It belongs to the DXR family. Mg(2+) serves as cofactor. Mn(2+) is required as a cofactor.

The enzyme catalyses 2-C-methyl-D-erythritol 4-phosphate + NADP(+) = 1-deoxy-D-xylulose 5-phosphate + NADPH + H(+). It participates in isoprenoid biosynthesis; isopentenyl diphosphate biosynthesis via DXP pathway; isopentenyl diphosphate from 1-deoxy-D-xylulose 5-phosphate: step 1/6. Its function is as follows. Catalyzes the NADPH-dependent rearrangement and reduction of 1-deoxy-D-xylulose-5-phosphate (DXP) to 2-C-methyl-D-erythritol 4-phosphate (MEP). This is 1-deoxy-D-xylulose 5-phosphate reductoisomerase from Gloeobacter violaceus (strain ATCC 29082 / PCC 7421).